The chain runs to 128 residues: Pi-hexatoxin-Hi1c (128 aa).

Residues 1–19 (MKLRITLALTSVLAFCVFG) form the signal peptide. Residues 20–47 (DKENENLMENLLEDDLLDIFTDAIHMER) constitute a propeptide that is removed on maturation. Disulfide bonds link cysteine 54/cysteine 69, cysteine 61/cysteine 74, cysteine 68/cysteine 84, cysteine 93/cysteine 108, cysteine 100/cysteine 113, and cysteine 107/cysteine 124. Domain repeat units follow at residues 54 to 84 (CIAKWKSCAGRKLDCCEGLECWKRRWGHEVC) and 93 to 124 (CLEKWKSCFERKYDCCEELECWERRGNKHPVC). A 2 X approximate repeats with cysteine pattern C-C-CC-C-C region spans residues 54-124 (CIAKWKSCAG…ERRGNKHPVC (71 aa)).

The protein belongs to the psalmotoxin-1 family. Double-knot toxin subfamily. In terms of tissue distribution, expressed by the venom gland.

It is found in the secreted. Its function is as follows. This toxin potently and selectively inhibits ASIC1a, an isoform of the gene ASIC1. It incompletely inhibits ASIC1a activation in a pH-independent and slowly reversible manner. This toxin acts by binding to and stabilizing the closed state of the channel, thereby impeding the transition into a conducting state. This toxin may bind to the acidic pocket of ASIC1a, since mutation of a key residue of this pocket (Arg-350) abolishes the ability of the toxin to inhibit ASIC1a. In vivo, this toxin protects the brain from neuronal injury when administered up to 8 hours after stroke onset. This chain is Pi-hexatoxin-Hi1c, found in Hadronyche infensa (Fraser island funnel-web spider).